A 263-amino-acid polypeptide reads, in one-letter code: 3-deoxy-manno-octulosonate cytidylyltransferase 1 (263 aa).

Belongs to the KdsB family.

The protein localises to the cytoplasm. It catalyses the reaction 3-deoxy-alpha-D-manno-oct-2-ulosonate + CTP = CMP-3-deoxy-beta-D-manno-octulosonate + diphosphate. The protein operates within nucleotide-sugar biosynthesis; CMP-3-deoxy-D-manno-octulosonate biosynthesis; CMP-3-deoxy-D-manno-octulosonate from 3-deoxy-D-manno-octulosonate and CTP: step 1/1. It functions in the pathway bacterial outer membrane biogenesis; lipopolysaccharide biosynthesis. In terms of biological role, activates KDO (a required 8-carbon sugar) for incorporation into bacterial lipopolysaccharide in Gram-negative bacteria. This is 3-deoxy-manno-octulosonate cytidylyltransferase 1 from Burkholderia ambifaria (strain ATCC BAA-244 / DSM 16087 / CCUG 44356 / LMG 19182 / AMMD) (Burkholderia cepacia (strain AMMD)).